The following is a 552-amino-acid chain: MDTSSEMLVRFGRRCGRAKESTEIRNSEEDQVLYLPLLPSKVDLQQVTIIPHDEWKRIQDSLDRLTREAACLRAERKAKKEMHLRSQEVVKHWTNTYAGMKEQKLEAKKKRDEEIEAERQILDLEEEIYKQGKRKKAIENAKQYQFYQTERVKNFHSGLLLSRVMKERDAQIEFRKSKIKSDKKWEEQLKLNIEKAFKEEQEKAEKRHRERVALAKDHLKQIKEHEEEEERRKKYEEKDAEEIKRQNALYEIEMRKKLEKKREEMHESRRRFLEHMQDKHIIKAVEQQQQEEEDEKMRKFIKAKKRLIQMGKEKEAETHRLMEKRRERIHNFLSELLKEKLDNEDMIIARDIAEAEAEWEKREREKDEKNKAELKTIAEYRAIVMKNKEEEERQRKIEAKEQLLAVMKADQIFWEHEKEKKCKADKEHQEVQDAHIQQMAKNKFNAKQAKQAELDYCRLTEALVAEKEKEFQDYAREVIELESETTNKYIYPLVKAVQEGPGGGRGPVFVDRGGLRPSYQANDVTGVQLPFYNSQGPKYNFQKSKRRLGFTW.

Coiled coils occupy residues 53 to 143 (DEWK…NAKQ), 186 to 307 (EEQL…KKRL), 348 to 409 (IARD…VMKA), and 460 to 488 (TEAL…TTNK). The interval 216-238 (KDHLKQIKEHEEEEERRKKYEEK) is disordered.

Microtubule inner protein component of sperm flagellar doublet microtubules. In terms of tissue distribution, expressed in airway epithelial cells.

It is found in the cytoplasm. The protein localises to the cytoskeleton. The protein resides in the cilium axoneme. Its subcellular location is the flagellum axoneme. Its function is as follows. Microtubule inner protein (MIP) part of the dynein-decorated doublet microtubules (DMTs) in cilia axoneme, which is required for motile cilia beating. The sequence is that of Cilia- and flagella- associated protein 210 from Homo sapiens (Human).